We begin with the raw amino-acid sequence, 560 residues long: Tudor and KH domain-containing protein (560 aa).

2 consecutive KH domains span residues 52-115 and 124-190; these read DIEI…KAAI and PVFE…KHLI. Residues Lys-65, Lys-76, Lys-110, Lys-112, Lys-152, Lys-175, Lys-181, Lys-187, and Lys-193 each participate in a glycyl lysine isopeptide (Lys-Gly) (interchain with G-Cter in ubiquitin) cross-link. The disordered stretch occupies residues 211-230; it reads RVPRKQPISVRREEVTEPGG. Glycyl lysine isopeptide (Lys-Gly) (interchain with G-Cter in ubiquitin) cross-links involve residues Lys-256 and Lys-267. A disordered region spans residues 268–291; sequence EGSWEKPNDDSFQNSGAQSSPETS. A compositionally biased stretch (polar residues) spans 277–290; that stretch reads DSFQNSGAQSSPET. The residue at position 278 (Ser-278) is a Phosphoserine. The Tudor domain occupies 353–412; it reads TVHVGDIVAAPLSTNGSWYRARVLGTLENGNLDLYFVDFGDNGDCALKDLRALRSDFLSL. Glycyl lysine isopeptide (Lys-Gly) (interchain with G-Cter in ubiquitin) cross-links involve residues Lys-479, Lys-510, and Lys-529.

Belongs to the Tdrkh family. In terms of assembly, interacts with (symmetrically methylated) PIWIL1, PIWIL2 and PIWIL4. In terms of processing, ubiquitinated by PRKN during mitophagy, leading to its degradation and enhancement of mitophagy. Deubiquitinated by USP30. Highly expressed in testis, present at lower level in brain. Weakly or not expressed in other tissues (at protein level).

It localises to the cytoplasm. The protein localises to the mitochondrion. Functionally, participates in the primary piRNA biogenesis pathway and is required during spermatogenesis to repress transposable elements and prevent their mobilization, which is essential for the germline integrity. The piRNA metabolic process mediates the repression of transposable elements during meiosis by forming complexes composed of piRNAs and Piwi proteins and govern the methylation and subsequent repression of transposons. Required for the final steps of primary piRNA biogenesis by participating in the processing of 31-37 nt intermediates into mature piRNAs. May act in pi-bodies and piP-bodies by transferring piRNA precursors or intermediates to or between these granules. The sequence is that of Tudor and KH domain-containing protein (Tdrkh) from Mus musculus (Mouse).